The chain runs to 403 residues: Octaketide synthase 1 (403 aa).

C174 is an active-site residue. CoA contacts are provided by residues S281 and G318 to A321.

Belongs to the thiolase-like superfamily. Chalcone/stilbene synthases family. As to quaternary structure, homodimer.

Its pathway is secondary metabolite biosynthesis; flavonoid biosynthesis. In terms of biological role, catalyzes the iterative condensations of 8 molecules of malonyl-CoA to produce aromatic octaketides, SEK4 and SEK4b, the products of the minimal polyketide synthase for the benzoisochromanequinone actinorhodin. May be involved in the biosynthesis of the octaketide barbaloin. This Aloe arborescens (Kidachi aloe) protein is Octaketide synthase 1.